A 63-amino-acid polypeptide reads, in one-letter code: H/ACA ribonucleoprotein complex subunit 3-like protein (63 aa).

The tract at residues Lys18 to Tyr40 is disordered.

This sequence belongs to the NOP10 family. As to quaternary structure, component of the small nucleolar ribonucleoprotein particles containing H/ACA-type snoRNAs (H/ACA snoRNPs).

It localises to the nucleus. The protein resides in the nucleolus. In terms of biological role, required for ribosome biogenesis. Part of a complex which catalyzes pseudouridylation of rRNA. This involves the isomerization of uridine such that the ribose is subsequently attached to C5, instead of the normal N1. Pseudouridine ('psi') residues may serve to stabilize the conformation of rRNAs. The polypeptide is H/ACA ribonucleoprotein complex subunit 3-like protein (Trypanosoma cruzi).